The following is a 395-amino-acid chain: Pyruvate synthase subunit PorA (395 aa).

In terms of assembly, heterotetramer of one alpha, one beta, one delta and one gamma chain.

The enzyme catalyses 2 oxidized [2Fe-2S]-[ferredoxin] + pyruvate + CoA = 2 reduced [2Fe-2S]-[ferredoxin] + acetyl-CoA + CO2 + H(+). This Pyrococcus abyssi (strain GE5 / Orsay) protein is Pyruvate synthase subunit PorA (porA).